A 171-amino-acid chain; its full sequence is Small ribosomal subunit protein uS5 (171 aa).

Residues 12 to 75 (LKEKLISVNR…EKARRNMIQV (64 aa)) form the S5 DRBM domain.

It belongs to the universal ribosomal protein uS5 family. Part of the 30S ribosomal subunit. Contacts proteins S4 and S8.

Its function is as follows. With S4 and S12 plays an important role in translational accuracy. Functionally, located at the back of the 30S subunit body where it stabilizes the conformation of the head with respect to the body. The polypeptide is Small ribosomal subunit protein uS5 (Buchnera aphidicola subsp. Baizongia pistaciae (strain Bp)).